The sequence spans 641 residues: ATP-dependent zinc metalloprotease FtsH (641 aa).

Over Met-1–Tyr-16 the chain is Cytoplasmic. The helical transmembrane segment at Leu-17 to Met-37 threads the bilayer. Topologically, residues Ala-38–Asp-131 are extracellular. A helical membrane pass occupies residues Phe-132 to Met-152. Over Phe-153–Glu-641 the chain is Cytoplasmic. Gly-222–Thr-229 lines the ATP pocket. His-444 provides a ligand contact to Zn(2+). Residue Glu-445 is part of the active site. The Zn(2+) site is built by His-448 and Asp-520.

The protein in the central section; belongs to the AAA ATPase family. It in the C-terminal section; belongs to the peptidase M41 family. In terms of assembly, homohexamer. It depends on Zn(2+) as a cofactor.

The protein localises to the cell membrane. Functionally, acts as a processive, ATP-dependent zinc metallopeptidase for both cytoplasmic and membrane proteins. Plays a role in the quality control of integral membrane proteins. This chain is ATP-dependent zinc metalloprotease FtsH, found in Acholeplasma laidlawii (strain PG-8A).